Here is a 254-residue protein sequence, read N- to C-terminus: uncharacterized protein (254 aa).

The protein belongs to the MtxX family.

This is an uncharacterized protein from Methanopyrus kandleri (strain AV19 / DSM 6324 / JCM 9639 / NBRC 100938).